Consider the following 192-residue polypeptide: MISISDTAQAHFRKLLEKQPDGTNIRVFVVNPGTQNAECGVSYCPPDAVDPEDQHLPFSGFDCLVDPLSAPFLVDATIDFVTDQMGSQLTLKAPNAKMRKVADDAPLIDRIEYVLMSEVNPMLAGHGGKVTLVELTEDKLAILQFGGGCNGCSMVDYTLKEGIEKQLLEKFPGELNGVKDATEHQRGDHSYY.

[4Fe-4S] cluster-binding residues include Cys-149 and Cys-152.

This sequence belongs to the NfuA family. Homodimer. The cofactor is [4Fe-4S] cluster.

Its function is as follows. Involved in iron-sulfur cluster biogenesis. Binds a 4Fe-4S cluster, can transfer this cluster to apoproteins, and thereby intervenes in the maturation of Fe/S proteins. Could also act as a scaffold/chaperone for damaged Fe/S proteins. This Aeromonas hydrophila subsp. hydrophila (strain ATCC 7966 / DSM 30187 / BCRC 13018 / CCUG 14551 / JCM 1027 / KCTC 2358 / NCIMB 9240 / NCTC 8049) protein is Fe/S biogenesis protein NfuA.